The primary structure comprises 246 residues: Probable transcriptional regulatory protein CLD_1467 (246 aa).

Belongs to the TACO1 family.

The protein localises to the cytoplasm. This is Probable transcriptional regulatory protein CLD_1467 from Clostridium botulinum (strain Okra / Type B1).